A 404-amino-acid chain; its full sequence is MAESVERLQQRVQELERELAQERSLQVPRSGDGGGGRVRIEKMSSEVVDSNPYSRLMALKRMGIVSDYEKIRTFAVAIVGVGGVGSVTAEMLTRCGIGKLLLFDYDKVELANMNRLFFQPHQAGLSKVQAAEHTLRNINPDVLFEVHNYNITTVENFQHFMDRISNGGLEEGKPVDLVLSCVDNFEARMTINTACNELGQTWMESGVSENAVSGHIQLIIPGESACFACAPPLVVAANIDEKSLKREGVCAASLPTTMGVVAGILVQNVLKFLLNFGTVSFYLGYNAMQDFFPTMSMKPNPQCDDRNCRKQQEEYKKKVAALPKQEVIQEKEEIIHEDNEWGIELVSEVSEEELKNSSGPVPDLPEGITVAYTIPKKQEDSVTEVTVEDSGESLEDLMAKMKNM.

Serine 45 bears the Phosphoserine mark. 5 residues coordinate ATP: glycine 83, aspartate 104, lysine 127, asparagine 150, and asparagine 184. Zn(2+) contacts are provided by cysteine 226 and cysteine 229. Cysteine 250 acts as the Glycyl thioester intermediate in catalysis. Zn(2+) contacts are provided by cysteine 303 and cysteine 308. Residues 334-346 (IIHEDNEWGIELV) carry the UFM1-interacting sequence (UIS) motif. The tract at residues 347-377 (SEVSEEELKNSSGPVPDLPEGITVAYTIPKK) is linker. A phosphoserine mark is found at serine 358 and serine 393. The short motif at 389–404 (DSGESLEDLMAKMKNM) is the UFC1-binding sequence (UFC) element.

Belongs to the ubiquitin-activating E1 family. UBA5 subfamily. Homodimer; homodimerization is required for UFM1 activation. Interacts (via UIS motif) with UFM1; binds UFM1 via a trans-binding mechanism in which UFM1 interacts with distinct sites in both subunits of the UBA5 homodimer. Interacts (via C-terminus) with UFC1. Interacts (via UIS motif) with GABARAPL2 and, with lower affinity, with GABARAP and GABARAPL1.

It is found in the cytoplasm. Its subcellular location is the nucleus. The protein resides in the endoplasmic reticulum membrane. It localises to the golgi apparatus. Its function is as follows. E1-like enzyme which specifically catalyzes the first step in ufmylation. Activates UFM1 by first adenylating its C-terminal glycine residue with ATP, and thereafter linking this residue to the side chain of a cysteine residue in E1, yielding a UFM1-E1 thioester and free AMP. Activates UFM1 via a trans-binding mechanism, in which UFM1 interacts with distinct sites in both subunits of the UBA5 homodimer. Trans-binding also promotes stabilization of the UBA5 homodimer, and enhances ATP-binding. Transfer of UFM1 from UBA5 to the E2-like enzyme UFC1 also takes place using a trans mechanism. Ufmylation plays a key role in various processes, such as ribosome recycling, response to DNA damage, interferon response or reticulophagy (also called ER-phagy). Ufmylation is essential for erythroid differentiation of both megakaryocytes and erythrocytes. In Pongo abelii (Sumatran orangutan), this protein is Ubiquitin-like modifier-activating enzyme 5.